Here is a 127-residue protein sequence, read N- to C-terminus: uncharacterized protein (127 aa).

An N-terminal signal peptide occupies residues 1-16 (MIKKIIFGIAILLSLS). The N-palmitoyl cysteine moiety is linked to residue Cys17. Residue Cys17 is the site of S-diacylglycerol cysteine attachment. Residues 56–101 (EVRKEIQEYRVEIVDINKKKRELYNSLSKEAQNFLAEQQKYKQKLS) are a coiled coil. Residues 101-127 (SISKLPTEDDSPNNTANSKDNKDTDTK) form a disordered region.

It is found in the cell membrane. This is an uncharacterized protein from Rickettsia felis (strain ATCC VR-1525 / URRWXCal2) (Rickettsia azadi).